The chain runs to 446 residues: N-succinylarginine dihydrolase (446 aa).

Substrate-binding positions include 19–28 (SGLSYGNVAS), Asn-110, and 137–138 (HR). Residue Glu-174 is part of the active site. Arg-214 is a binding site for substrate. His-250 is an active-site residue. 2 residues coordinate substrate: Asp-252 and Asn-363. Cys-369 acts as the Nucleophile in catalysis.

It belongs to the succinylarginine dihydrolase family. Homodimer.

It catalyses the reaction N(2)-succinyl-L-arginine + 2 H2O + 2 H(+) = N(2)-succinyl-L-ornithine + 2 NH4(+) + CO2. It participates in amino-acid degradation; L-arginine degradation via AST pathway; L-glutamate and succinate from L-arginine: step 2/5. Functionally, catalyzes the hydrolysis of N(2)-succinylarginine into N(2)-succinylornithine, ammonia and CO(2). This is N-succinylarginine dihydrolase from Hahella chejuensis (strain KCTC 2396).